The chain runs to 193 residues: AP-3 complex subunit sigma-1 (193 aa).

Phosphoserine is present on Ser-191.

This sequence belongs to the adaptor complexes small subunit family. Adaptor protein complex 3 (AP-3) is a heterotetramer composed of two large adaptins (delta-type subunit AP3D1 and beta-type subunit AP3B1 or AP3B2), a medium adaptin (mu-type subunit AP3M1 or AP3M2) and a small adaptin (sigma-type subunit APS1 or AP3S2). Interacts with AGAP1. AP-3 associates with the BLOC-1 complex.

It is found in the golgi apparatus. It localises to the cytoplasmic vesicle membrane. Functionally, part of the AP-3 complex, an adaptor-related complex which is not clathrin-associated. The complex is associated with the Golgi region as well as more peripheral structures. It facilitates the budding of vesicles from the Golgi membrane and may be directly involved in trafficking to lysosomes. In concert with the BLOC-1 complex, AP-3 is required to target cargos into vesicles assembled at cell bodies for delivery into neurites and nerve terminals. The chain is AP-3 complex subunit sigma-1 (AP3S1) from Bos taurus (Bovine).